Consider the following 406-residue polypeptide: Imidazolonepropionase (406 aa).

Residues His-72 and His-74 each contribute to the Fe(3+) site. Positions 72 and 74 each coordinate Zn(2+). Residues Arg-81, Tyr-144, and His-177 each coordinate 4-imidazolone-5-propanoate. Position 144 (Tyr-144) interacts with N-formimidoyl-L-glutamate. His-242 is a binding site for Fe(3+). A Zn(2+)-binding site is contributed by His-242. Gln-245 lines the 4-imidazolone-5-propanoate pocket. Position 317 (Asp-317) interacts with Fe(3+). A Zn(2+)-binding site is contributed by Asp-317. Positions 319 and 321 each coordinate N-formimidoyl-L-glutamate. Thr-322 contributes to the 4-imidazolone-5-propanoate binding site.

The protein belongs to the metallo-dependent hydrolases superfamily. HutI family. Zn(2+) serves as cofactor. It depends on Fe(3+) as a cofactor.

It localises to the cytoplasm. It carries out the reaction 4-imidazolone-5-propanoate + H2O = N-formimidoyl-L-glutamate. Its pathway is amino-acid degradation; L-histidine degradation into L-glutamate; N-formimidoyl-L-glutamate from L-histidine: step 3/3. Functionally, catalyzes the hydrolytic cleavage of the carbon-nitrogen bond in imidazolone-5-propanoate to yield N-formimidoyl-L-glutamate. It is the third step in the universal histidine degradation pathway. This chain is Imidazolonepropionase, found in Yersinia pestis bv. Antiqua (strain Antiqua).